The primary structure comprises 291 residues: Protein ZAR1-like (291 aa).

Residues 103–152 (GSQTLHSSSLSDRTSSRKPTEAWEVGRRALIRRPQDGEDEESQEELTGPT) are disordered. Residues 106-115 (TLHSSSLSDR) show a composition bias toward low complexity. The span at 116 to 129 (TSSRKPTEAWEVGR) shows a compositional bias: basic and acidic residues. Residues 195 to 280 (LKYGYFHCKD…QELCGHCKDK (86 aa)) form a 3CxxC-type zinc finger.

This sequence belongs to the ZAR1 family. In terms of assembly, interacts with YBX2. As to expression, expressed in oocytes and zygotes. Predominantly expressed in maturing oocytes before maternal-to-zygotic transition (MZT). Less abundant than Zar1.

It localises to the cytoplasm. Its subcellular location is the cytoplasmic ribonucleoprotein granule. Functionally, mRNA-binding protein required for maternal mRNA storage, translation and degradation during oocyte maturation. Probably promotes formation of some phase-separated membraneless compartment that stores maternal mRNAs in oocytes: acts by undergoing liquid-liquid phase separation upon binding to maternal mRNAs. Binds to the 3'-UTR of maternal mRNAs, inhibiting their translation. This is Protein ZAR1-like from Mus musculus (Mouse).